The primary structure comprises 328 residues: uncharacterized protein (328 aa).

The N-terminal stretch at 1-25 (MKLFNFKKLSMLIAGFTLVTSPALA) is a signal peptide.

The protein belongs to the bacterial solute-binding protein 7 family.

The protein localises to the periplasm. This is an uncharacterized protein from Haemophilus influenzae (strain ATCC 51907 / DSM 11121 / KW20 / Rd).